We begin with the raw amino-acid sequence, 617 residues long: uncharacterized protein (617 aa).

A helical membrane pass occupies residues 103-123; the sequence is AGVLLAKFFPLLFLYPLTYLA. The Protein kinase domain occupies 200-609; that stretch reads FETREPVGSG…DILEAAKPFL (410 aa). ATP-binding positions include 206 to 214 and K302; that span reads VGSGCVAQV. D436 functions as the Proton acceptor in the catalytic mechanism.

It belongs to the protein kinase superfamily. ADCK protein kinase family.

The protein resides in the mitochondrion. It is found in the membrane. Its function is as follows. The function of this protein is not yet clear. It is not known if it has protein kinase activity and what type of substrate it would phosphorylate (Ser, Thr or Tyr). Involved in the mitochondrial import of CoQ precursors, plays a role in muscle mitochondrial function and fatty acid beta-oxidation. This is an uncharacterized protein from Mus musculus (Mouse).